We begin with the raw amino-acid sequence, 211 residues long: Stromal cell-derived factor 2 (211 aa).

The signal sequence occupies residues 1–18 (MAVVSLLLFGGLWSAVGS). MIR domains follow at residues 21-75 (LAVV…IRGK), 83-138 (GTPI…VLCN), and 139-193 (GPYW…AMEG).

The protein localises to the secreted. In Bos taurus (Bovine), this protein is Stromal cell-derived factor 2 (SDF2).